Reading from the N-terminus, the 154-residue chain is Ribosomal RNA large subunit methyltransferase H (154 aa).

S-adenosyl-L-methionine is bound at residue glycine 102.

The protein belongs to the RNA methyltransferase RlmH family. Homodimer.

It is found in the cytoplasm. It catalyses the reaction pseudouridine(1915) in 23S rRNA + S-adenosyl-L-methionine = N(3)-methylpseudouridine(1915) in 23S rRNA + S-adenosyl-L-homocysteine + H(+). Functionally, specifically methylates the pseudouridine at position 1915 (m3Psi1915) in 23S rRNA. In Phenylobacterium zucineum (strain HLK1), this protein is Ribosomal RNA large subunit methyltransferase H.